The following is a 610-amino-acid chain: UvrABC system protein C (610 aa).

Positions Ser-16–Val-94 constitute a GIY-YIG domain. Residues Asp-204 to Val-239 enclose the UVR domain.

It belongs to the UvrC family. Interacts with UvrB in an incision complex.

The protein resides in the cytoplasm. Its function is as follows. The UvrABC repair system catalyzes the recognition and processing of DNA lesions. UvrC both incises the 5' and 3' sides of the lesion. The N-terminal half is responsible for the 3' incision and the C-terminal half is responsible for the 5' incision. In Erwinia tasmaniensis (strain DSM 17950 / CFBP 7177 / CIP 109463 / NCPPB 4357 / Et1/99), this protein is UvrABC system protein C.